Here is a 553-residue protein sequence, read N- to C-terminus: Coiled-coil domain-containing protein 22 homolog (553 aa).

Positions 236–264 (DSEEPAPPPISTVKPDASAEEEASPIQEL) are disordered. Coiled coils occupy residues 261-286 (IQEL…KAHA), 314-407 (ERTS…QSLA), and 498-549 (NVTK…VEQP).

It belongs to the CCDC22 family.

The protein is Coiled-coil domain-containing protein 22 homolog of Drosophila erecta (Fruit fly).